We begin with the raw amino-acid sequence, 154 residues long: NADPH-dependent 7-cyano-7-deazaguanine reductase (154 aa).

Residues 1-13 (MSKTDVSGLSQLG) are compositionally biased toward polar residues. The tract at residues 1-24 (MSKTDVSGLSQLGRQVDAPTSPET) is disordered. C52 functions as the Thioimide intermediate in the catalytic mechanism. Residue D59 is the Proton donor of the active site. Residues 74 to 76 (VES) and 93 to 94 (HE) each bind substrate.

It belongs to the GTP cyclohydrolase I family. QueF type 1 subfamily.

Its subcellular location is the cytoplasm. The catalysed reaction is 7-aminomethyl-7-carbaguanine + 2 NADP(+) = 7-cyano-7-deazaguanine + 2 NADPH + 3 H(+). Its pathway is tRNA modification; tRNA-queuosine biosynthesis. Its function is as follows. Catalyzes the NADPH-dependent reduction of 7-cyano-7-deazaguanine (preQ0) to 7-aminomethyl-7-deazaguanine (preQ1). This chain is NADPH-dependent 7-cyano-7-deazaguanine reductase, found in Allorhizobium ampelinum (strain ATCC BAA-846 / DSM 112012 / S4) (Agrobacterium vitis (strain S4)).